The following is a 130-amino-acid chain: Large ribosomal subunit protein bL20c (130 aa).

It belongs to the bacterial ribosomal protein bL20 family.

Its subcellular location is the plastid. The protein localises to the chloroplast. Functionally, binds directly to 23S ribosomal RNA and is necessary for the in vitro assembly process of the 50S ribosomal subunit. It is not involved in the protein synthesizing functions of that subunit. In Oenothera argillicola (Appalachian evening primrose), this protein is Large ribosomal subunit protein bL20c.